The primary structure comprises 240 residues: UDP-2,3-diacylglucosamine hydrolase (240 aa).

Residues D8, H10, D41, N79, and H114 each coordinate Mn(2+). 79–80 (NR) is a binding site for substrate. D122, S160, N164, K167, and H195 together coordinate substrate. 2 residues coordinate Mn(2+): H195 and H197.

The protein belongs to the LpxH family. Mn(2+) is required as a cofactor.

It is found in the cell inner membrane. The enzyme catalyses UDP-2-N,3-O-bis[(3R)-3-hydroxytetradecanoyl]-alpha-D-glucosamine + H2O = 2-N,3-O-bis[(3R)-3-hydroxytetradecanoyl]-alpha-D-glucosaminyl 1-phosphate + UMP + 2 H(+). It participates in glycolipid biosynthesis; lipid IV(A) biosynthesis; lipid IV(A) from (3R)-3-hydroxytetradecanoyl-[acyl-carrier-protein] and UDP-N-acetyl-alpha-D-glucosamine: step 4/6. Its function is as follows. Hydrolyzes the pyrophosphate bond of UDP-2,3-diacylglucosamine to yield 2,3-diacylglucosamine 1-phosphate (lipid X) and UMP by catalyzing the attack of water at the alpha-P atom. Involved in the biosynthesis of lipid A, a phosphorylated glycolipid that anchors the lipopolysaccharide to the outer membrane of the cell. The polypeptide is UDP-2,3-diacylglucosamine hydrolase (Escherichia coli O127:H6 (strain E2348/69 / EPEC)).